Reading from the N-terminus, the 518-residue chain is Cytochrome P450 monooxygenase psoD (518 aa).

A heme-binding site is contributed by Cys-442.

It belongs to the cytochrome P450 family. Heme serves as cofactor.

It functions in the pathway secondary metabolite biosynthesis. Its function is as follows. Cytochrome P450 monooxygenase; part of the gene cluster that mediates the biosynthesis of pseurotin A, a competitive inhibitor of chitin synthase and an inducer of nerve-cell proliferation. The PKS-NRPS hybrid synthetase psoA is responsible for the biosynthesis of azaspirene, one of the first intermediates having the 1-oxa-7-azaspiro[4,4]-non-2-ene-4,6-dione core of pseurotin, via condensation of one acetyl-CoA, 4 malonyl-CoA, and a L-phenylalanine molecule. The dual-functional monooxygenase/methyltransferase psoF seems to be involved in the addition of the C3 methyl group onto the pseurotin scaffold. Azaspirene is then converted to synerazol through 4 steps including oxidation of C17 by the cytochrome P450 monooxygenase psoD, O-methylation of the hydroxy group of C8 by the methyltransferase psoC, and the trans-to-cis isomerization of the C13 olefin by the glutathione S-transferase psoE. The fourth step of synerazol production is performed by the dual-functional monooxygenase/methyltransferase psoF which seems to catalyze the epoxidation of the intermediate deepoxy-synerazol. Synerazol can be attacked by a water molecule nonenzymatically at two different positions to yield two diol products, pseurotin A and pseurotin D. The polypeptide is Cytochrome P450 monooxygenase psoD (Aspergillus fumigatus (strain ATCC MYA-4609 / CBS 101355 / FGSC A1100 / Af293) (Neosartorya fumigata)).